Reading from the N-terminus, the 390-residue chain is Chorismate synthase (390 aa).

NADP(+) is bound by residues R39 and R45. Residues 132–134 (RSS), 253–254 (NA), G298, 313–317 (KPIPT), and R339 each bind FMN.

The protein belongs to the chorismate synthase family. In terms of assembly, homotetramer. FMNH2 is required as a cofactor.

The catalysed reaction is 5-O-(1-carboxyvinyl)-3-phosphoshikimate = chorismate + phosphate. Its pathway is metabolic intermediate biosynthesis; chorismate biosynthesis; chorismate from D-erythrose 4-phosphate and phosphoenolpyruvate: step 7/7. Catalyzes the anti-1,4-elimination of the C-3 phosphate and the C-6 proR hydrogen from 5-enolpyruvylshikimate-3-phosphate (EPSP) to yield chorismate, which is the branch point compound that serves as the starting substrate for the three terminal pathways of aromatic amino acid biosynthesis. This reaction introduces a second double bond into the aromatic ring system. The chain is Chorismate synthase from Bacillus pumilus (strain SAFR-032).